We begin with the raw amino-acid sequence, 247 residues long: GTP cyclohydrolase 1 type 2 homolog (247 aa).

A divalent metal cation is bound by residues H63, H64, D101, H215, and E219.

It belongs to the GTP cyclohydrolase I type 2/NIF3 family. As to quaternary structure, toroid-shaped homohexamer. In the hexamer, 3 dimers assemble to form a ring-like structure surrounding a central hole.

Provides significant protection from radiation damage and may be involved in the degradation of radiation-damaged nucleotides. The chain is GTP cyclohydrolase 1 type 2 homolog (ybgI) from Salmonella typhi.